A 443-amino-acid chain; its full sequence is Histidinol dehydrogenase (443 aa).

Tyr133, Gln191, and Asn214 together coordinate NAD(+). The substrate site is built by Ser240, Gln262, and His265. Residues Gln262 and His265 each coordinate Zn(2+). Residues Glu329 and His330 each act as proton acceptor in the active site. Residues His330, Asp363, Glu417, and His422 each contribute to the substrate site. A Zn(2+)-binding site is contributed by Asp363. A Zn(2+)-binding site is contributed by His422.

This sequence belongs to the histidinol dehydrogenase family. In terms of assembly, homodimer. It depends on Zn(2+) as a cofactor.

It catalyses the reaction L-histidinol + 2 NAD(+) + H2O = L-histidine + 2 NADH + 3 H(+). It participates in amino-acid biosynthesis; L-histidine biosynthesis; L-histidine from 5-phospho-alpha-D-ribose 1-diphosphate: step 9/9. Its function is as follows. Catalyzes the sequential NAD-dependent oxidations of L-histidinol to L-histidinaldehyde and then to L-histidine. In Blochmanniella pennsylvanica (strain BPEN), this protein is Histidinol dehydrogenase.